Reading from the N-terminus, the 207-residue chain is Large ribosomal subunit protein uL4 (207 aa).

Residues 43–85 (SRRQGTHDTKGRSEVRGGGRKPWKQKGTGRARQGSIRSPQWVG) are disordered. Basic and acidic residues predominate over residues 47-59 (GTHDTKGRSEVRG). Residues 60–71 (GGRKPWKQKGTG) are compositionally biased toward basic residues.

The protein belongs to the universal ribosomal protein uL4 family. In terms of assembly, part of the 50S ribosomal subunit.

Its function is as follows. One of the primary rRNA binding proteins, this protein initially binds near the 5'-end of the 23S rRNA. It is important during the early stages of 50S assembly. It makes multiple contacts with different domains of the 23S rRNA in the assembled 50S subunit and ribosome. In terms of biological role, forms part of the polypeptide exit tunnel. In Exiguobacterium sibiricum (strain DSM 17290 / CCUG 55495 / CIP 109462 / JCM 13490 / 255-15), this protein is Large ribosomal subunit protein uL4.